Consider the following 762-residue polypeptide: Cellulose synthase-like protein H2 (762 aa).

Positions 1-15 are enriched in low complexity; it reads MAVVAAAAATGSTTR. The disordered stretch occupies residues 1–39; sequence MAVVAAAAATGSTTRSGGGGGEGTRSGRKKPPPPPLQER. 2 helical membrane passes run 47–67 and 81–101; these read AWAW…LLAL and GVWR…ALNV. Catalysis depends on residues Asp180 and Asp470. The next 6 membrane-spanning stretches (helical) occupy residues 541–561, 582–602, 619–639, 673–693, 708–728, and 739–759; these read LAYL…CYGL, FSVP…EYMA, IISV…SLGL, LPVF…VTVG, APGI…FPFV, and GIPW…VTFC.

The protein belongs to the glycosyltransferase 2 family. Plant cellulose synthase-like H subfamily.

The protein localises to the golgi apparatus membrane. Its function is as follows. Thought to be a Golgi-localized beta-glycan synthase that polymerize the backbones of noncellulosic polysaccharides (hemicelluloses) of plant cell wall. This Oryza sativa subsp. indica (Rice) protein is Cellulose synthase-like protein H2 (CSLH2).